The following is a 224-amino-acid chain: Adenylate kinase (224 aa).

Position 10–15 (10–15) interacts with ATP; that stretch reads GSGKST. The interval 30 to 59 is NMP; that stretch reads SSGDLIRGEIERKSSLGLEMAAYLSRGDLI. AMP is bound by residues serine 31, arginine 36, 57–59, 83–86, and glutamine 90; these read DLI and GYPR. Residues 124-161 are LID; the sequence is GRRICPNCGAVYHITYNPPKVPGICDVCGTKLIQRTDD. Arginine 125 serves as a coordination point for ATP. Residues cysteine 128 and cysteine 131 each contribute to the Zn(2+) site. 134-135 provides a ligand contact to ATP; the sequence is VY. Zn(2+)-binding residues include cysteine 148 and cysteine 151. Positions 158 and 169 each coordinate AMP. Glycine 197 contributes to the ATP binding site.

Belongs to the adenylate kinase family. Monomer.

It localises to the cytoplasm. It carries out the reaction AMP + ATP = 2 ADP. It functions in the pathway purine metabolism; AMP biosynthesis via salvage pathway; AMP from ADP: step 1/1. In terms of biological role, catalyzes the reversible transfer of the terminal phosphate group between ATP and AMP. Plays an important role in cellular energy homeostasis and in adenine nucleotide metabolism. The protein is Adenylate kinase of Thermococcus gammatolerans (strain DSM 15229 / JCM 11827 / EJ3).